Consider the following 249-residue polypeptide: Large ribosomal subunit protein uL30A (249 aa).

This sequence belongs to the universal ribosomal protein uL30 family. In terms of assembly, component of the small ribosomal subunit (SSU). Mature yeast ribosomes consist of a small (40S) and a large (60S) subunit. The 40S small subunit contains 1 molecule of ribosomal RNA (18S rRNA) and at least 33 different proteins. The large 60S subunit contains 3 rRNA molecules (25S, 5.8S and 5S rRNA) and at least 46 different proteins.

The protein localises to the cytoplasm. It localises to the nucleus. Its subcellular location is the nucleolus. Component of the ribosome, a large ribonucleoprotein complex responsible for the synthesis of proteins in the cell. The small ribosomal subunit (SSU) binds messenger RNAs (mRNAs) and translates the encoded message by selecting cognate aminoacyl-transfer RNA (tRNA) molecules. The large subunit (LSU) contains the ribosomal catalytic site termed the peptidyl transferase center (PTC), which catalyzes the formation of peptide bonds, thereby polymerizing the amino acids delivered by tRNAs into a polypeptide chain. The nascent polypeptides leave the ribosome through a tunnel in the LSU and interact with protein factors that function in enzymatic processing, targeting, and the membrane insertion of nascent chains at the exit of the ribosomal tunnel. In Schizosaccharomyces pombe (strain 972 / ATCC 24843) (Fission yeast), this protein is Large ribosomal subunit protein uL30A (rlp7).